Reading from the N-terminus, the 222-residue chain is GTP cyclohydrolase 1 (222 aa).

Residues Cys111, His114, and Cys182 each coordinate Zn(2+).

It belongs to the GTP cyclohydrolase I family. As to quaternary structure, toroid-shaped homodecamer, composed of two pentamers of five dimers.

It carries out the reaction GTP + H2O = 7,8-dihydroneopterin 3'-triphosphate + formate + H(+). It participates in cofactor biosynthesis; 7,8-dihydroneopterin triphosphate biosynthesis; 7,8-dihydroneopterin triphosphate from GTP: step 1/1. In Enterobacter sp. (strain 638), this protein is GTP cyclohydrolase 1.